The primary structure comprises 513 residues: GMP synthase [glutamine-hydrolyzing] (513 aa).

One can recognise a Glutamine amidotransferase type-1 domain in the interval leucine 7 to aspartate 198. Cysteine 84 (nucleophile) is an active-site residue. Active-site residues include histidine 172 and glutamate 174. In terms of domain architecture, GMPS ATP-PPase spans tryptophan 199–arginine 388. ATP is bound at residue serine 226–serine 232.

In terms of assembly, homodimer.

It carries out the reaction XMP + L-glutamine + ATP + H2O = GMP + L-glutamate + AMP + diphosphate + 2 H(+). Its pathway is purine metabolism; GMP biosynthesis; GMP from XMP (L-Gln route): step 1/1. Its function is as follows. Catalyzes the synthesis of GMP from XMP. The protein is GMP synthase [glutamine-hydrolyzing] of Symbiobacterium thermophilum (strain DSM 24528 / JCM 14929 / IAM 14863 / T).